A 353-amino-acid polypeptide reads, in one-letter code: Neutral protease 2 homolog AO090001000135 (353 aa).

Residues 1–19 (MRFISVSSLLLALAPALNA) form the signal peptide. Residues 20 to 176 (VPVEVAGSAQ…TQAVKILERR (157 aa)) constitute a propeptide that is removed on maturation. Disulfide bonds link C182–C254 and C261–C279. H304 contacts Zn(2+). E305 is a catalytic residue. Positions 308 and 319 each coordinate Zn(2+).

Belongs to the peptidase M35 family. It depends on Zn(2+) as a cofactor.

It localises to the secreted. It carries out the reaction Preferential cleavage of bonds with hydrophobic residues in P1'. Also 3-Asn-|-Gln-4 and 8-Gly-|-Ser-9 bonds in insulin B chain.. Functionally, secreted metalloproteinase that allows assimilation of proteinaceous substrates. Shows high activities on basic nuclear substrates such as histone and protamine. In Aspergillus oryzae (strain ATCC 42149 / RIB 40) (Yellow koji mold), this protein is Neutral protease 2 homolog AO090001000135.